The following is a 369-amino-acid chain: Choline kinase B2 (369 aa).

This sequence belongs to the choline/ethanolamine kinase family. It depends on Mg(2+) as a cofactor.

The catalysed reaction is choline + ATP = phosphocholine + ADP + H(+). Its pathway is phospholipid metabolism; phosphatidylcholine biosynthesis; phosphocholine from choline: step 1/1. Its function is as follows. Catalyzes the first step in phosphatidylcholine biosynthesis. Phosphorylates choline. The polypeptide is Choline kinase B2 (ckb-2) (Caenorhabditis elegans).